The primary structure comprises 146 residues: Hemoglobin subunit beta-C (146 aa).

The Globin domain maps to 2–146 (EWTDFERATI…VVSSLGRQYH (145 aa)). Residues histidine 63 and histidine 92 each coordinate heme b.

It belongs to the globin family. In terms of assembly, hbC is a heterotetramer of two alpha chains and two beta-C chains. As to expression, red blood cells.

Functionally, involved in oxygen transport from gills to the various peripheral tissues. The protein is Hemoglobin subunit beta-C (hbbc) of Trematomus bernacchii (Emerald rockcod).